The primary structure comprises 107 residues: ATP-dependent Clp protease adapter protein ClpS (107 aa).

The interval 1 to 20 (MAQKHEHDTSVITESAPKQK) is disordered.

The protein belongs to the ClpS family. Binds to the N-terminal domain of the chaperone ClpA.

Functionally, involved in the modulation of the specificity of the ClpAP-mediated ATP-dependent protein degradation. The chain is ATP-dependent Clp protease adapter protein ClpS from Myxococcus xanthus (strain DK1622).